The sequence spans 101 residues: ATP-dependent Clp protease adapter protein ClpS 1 (101 aa).

Belongs to the ClpS family. In terms of assembly, binds to the N-terminal domain of the chaperone ClpA.

In terms of biological role, involved in the modulation of the specificity of the ClpAP-mediated ATP-dependent protein degradation. The polypeptide is ATP-dependent Clp protease adapter protein ClpS 1 (Bradyrhizobium diazoefficiens (strain JCM 10833 / BCRC 13528 / IAM 13628 / NBRC 14792 / USDA 110)).